The sequence spans 930 residues: G patch domain-containing protein TGH (930 aa).

Lysine 25 participates in a covalent cross-link: Glycyl lysine isopeptide (Lys-Gly) (interchain with G-Cter in ubiquitin). A disordered region spans residues glycine 76 to aspartate 152. The G-patch domain maps to serine 159–tyrosine 199. An SURP motif repeat occupies leucine 405 to alanine 447. Disordered regions lie at residues alanine 478–glutamine 508, arginine 687–alanine 751, and phenylalanine 773–aspartate 930. Over residues proline 489–aspartate 498 the composition is skewed to basic and acidic residues. The segment covering threonine 499–glutamine 508 has biased composition (polar residues). Residues isoleucine 701–glutamate 711 show a composition bias toward acidic residues. A compositionally biased stretch (basic and acidic residues) spans glutamate 779 to threonine 808. The segment covering arginine 848–arginine 857 has biased composition (basic residues). Positions histidine 858–glycine 877 are enriched in basic and acidic residues. Basic residues predominate over residues arginine 892–serine 908. Over residues serine 913 to arginine 923 the composition is skewed to basic and acidic residues.

Expressed in vasculature of cotyledons and leaves, young meristematic tissues, trichomes and pistils.

It localises to the nucleus speckle. It is found in the nucleus. The protein localises to the nucleoplasm. In terms of biological role, functions as a component of microRNA (miRNA) and small interfering RNA (siRNA) biogenesis. May assist DCL1 and DCL4 to efficiently process and/or recruit the precursors of miRNAs and siRNAs. In the miRNA biogenesis pathway, associates with the DCL1 complex that processes primary miRNAs (pri-miRNAs) into miRNAs. Binds pri-miRNAs and precursor miRNAs (pre-miRNAs). Is required for the interaction between pri-miRNAs and DRB1. Required for general proper plant growth and, in particular, initiation of vascular development. Interacts genetically with AMP1, a glutamate carboxypeptidase involved in the regulation of meristem function. The protein is G patch domain-containing protein TGH of Arabidopsis thaliana (Mouse-ear cress).